A 437-amino-acid chain; its full sequence is MSMFLDTAKIKVKAGKGGDGMVAFRREKYVPNGGPWGGDGGHGGNVVFVVDEGLRTLMDFRYNRRFKADDGEKGMTKGMHGRGAEDLIVRVPQGTTVRDADTGKIITDLVENGQEFVIAHGGRGGRGNIRFATPKNPAPEISENGEPGEERNLELELKVLADVGLVGFPSVGKSTLLSVITAAKPKIGAYHFTTIVPNLGMVRTKSGESFAVADLPGLIEGASQGVGLGTQFLRHIERTRVILHVLDMSASEGRDPYEDYVAINNELETYNLRLMERPQIIVANKMDMPEAEEHLEEFKKKLATNYDEFEELPQIFPISGIAHQGLENLLEATAELLEKTPEFLLYDESDFQEEEAYYGFNPDEPEFAISRADDASWILSGDKLEKLFTMTNFDRDESVMKFARQLRGMGVDEALRARGAKDGDIVRIGKFEFEFVD.

The 159-residue stretch at 2-160 folds into the Obg domain; sequence SMFLDTAKIK…RNLELELKVL (159 aa). The 178-residue stretch at 161 to 338 folds into the OBG-type G domain; it reads ADVGLVGFPS…LLEATAELLE (178 aa). GTP is bound by residues 167–174, 192–196, 214–217, 284–287, and 319–321; these read GFPSVGKS, FTTIV, DLPG, NKMD, and SGI. Residues serine 174 and threonine 194 each contribute to the Mg(2+) site. Residues 359-437 enclose the OCT domain; the sequence is GFNPDEPEFA…IGKFEFEFVD (79 aa).

The protein belongs to the TRAFAC class OBG-HflX-like GTPase superfamily. OBG GTPase family. In terms of assembly, monomer. The cofactor is Mg(2+).

Its subcellular location is the cytoplasm. Functionally, an essential GTPase which binds GTP, GDP and possibly (p)ppGpp with moderate affinity, with high nucleotide exchange rates and a fairly low GTP hydrolysis rate. Plays a role in control of the cell cycle, stress response, ribosome biogenesis and in those bacteria that undergo differentiation, in morphogenesis control. This chain is GTPase Obg, found in Streptococcus suis (strain 98HAH33).